Reading from the N-terminus, the 546-residue chain is Glucose-6-phosphate isomerase (546 aa).

Catalysis depends on E357, which acts as the Proton donor. Catalysis depends on residues H389 and K509.

Belongs to the GPI family.

The protein localises to the cytoplasm. The enzyme catalyses alpha-D-glucose 6-phosphate = beta-D-fructose 6-phosphate. It functions in the pathway carbohydrate biosynthesis; gluconeogenesis. Its pathway is carbohydrate degradation; glycolysis; D-glyceraldehyde 3-phosphate and glycerone phosphate from D-glucose: step 2/4. Its function is as follows. Catalyzes the reversible isomerization of glucose-6-phosphate to fructose-6-phosphate. This Anaeromyxobacter sp. (strain K) protein is Glucose-6-phosphate isomerase.